We begin with the raw amino-acid sequence, 237 residues long: NADPH-dependent FMN reductase ArsH (237 aa).

Residues 39-46 and 102-107 each bind FMN; these read SNRECSYS and SPERHG.

This sequence belongs to the ArsH family. As to quaternary structure, homotetramer. Requires FMN as cofactor.

Has NADPH-dependent FMN reductase activity and high NADPH-dependent ferric reductase activity with highest activity for Fe(3+) as substrate. No activity with NADH, iron trichloride, Cu(2+) or Ag(+). May be involved in cytosolic ferric iron assimilation as an NADPH-dependent ferric reductase in vivo. The protein is NADPH-dependent FMN reductase ArsH of Acidithiobacillus ferrooxidans (strain ATCC 23270 / DSM 14882 / CIP 104768 / NCIMB 8455) (Ferrobacillus ferrooxidans (strain ATCC 23270)).